The chain runs to 594 residues: Jacalin-related lectin 44 (594 aa).

Positions 1–23 are disordered; the sequence is MIQKLGAKGIKSDERNQREWDDG. 4 Jacalin-type lectin domains span residues 2–148, 151–293, 296–441, and 448–588; these read IQKL…YFIS, PTRL…YFST, PNKL…YYRP, and VKRL…HVIP. A compositionally biased stretch (basic and acidic residues) spans 10 to 23; it reads IKSDERNQREWDDG.

Belongs to the jacalin lectin family.

The protein is Jacalin-related lectin 44 (JAL44) of Arabidopsis thaliana (Mouse-ear cress).